A 425-amino-acid chain; its full sequence is Tyrosine--tRNA ligase (425 aa).

Residue Tyr37 participates in L-tyrosine binding. A 'HIGH' region motif is present at residues 42-51; sequence PTADSLHLGH. Residues Tyr175 and Gln179 each contribute to the L-tyrosine site. The short motif at 235 to 239 is the 'KMSKS' region element; sequence KFGKT. An ATP-binding site is contributed by Lys238. The S4 RNA-binding domain occupies 357-415; that stretch reads QDLQQALVNAELAPSRGQARKLIEAKSVSINGSLQTDAEYTFGEDDRLFGQYTLLRRGK.

The protein belongs to the class-I aminoacyl-tRNA synthetase family. TyrS type 1 subfamily. In terms of assembly, homodimer.

Its subcellular location is the cytoplasm. It catalyses the reaction tRNA(Tyr) + L-tyrosine + ATP = L-tyrosyl-tRNA(Tyr) + AMP + diphosphate + H(+). In terms of biological role, catalyzes the attachment of tyrosine to tRNA(Tyr) in a two-step reaction: tyrosine is first activated by ATP to form Tyr-AMP and then transferred to the acceptor end of tRNA(Tyr). The sequence is that of Tyrosine--tRNA ligase from Erwinia tasmaniensis (strain DSM 17950 / CFBP 7177 / CIP 109463 / NCPPB 4357 / Et1/99).